The primary structure comprises 580 residues: DNA mismatch repair protein MutL (580 aa).

Belongs to the DNA mismatch repair MutL/HexB family.

In terms of biological role, this protein is involved in the repair of mismatches in DNA. It is required for dam-dependent methyl-directed DNA mismatch repair. May act as a 'molecular matchmaker', a protein that promotes the formation of a stable complex between two or more DNA-binding proteins in an ATP-dependent manner without itself being part of a final effector complex. This is DNA mismatch repair protein MutL from Chlamydia caviae (strain ATCC VR-813 / DSM 19441 / 03DC25 / GPIC) (Chlamydophila caviae).